Here is a 2525-residue protein sequence, read N- to C-terminus: Highly reducing polyketide synthase cm3B (2525 aa).

A compositionally biased stretch (polar residues) spans 1–10; sequence MQSDTNNSPL. Residues 1-29 are disordered; the sequence is MQSDTNNSPLSWEELRSGAASSDANSSPP. The 422-residue stretch at 29–450 folds into the Ketosynthase family 3 (KS3) domain; the sequence is PEPIAIIGMS…GTNAHVVVDA (422 aa). Catalysis depends on for beta-ketoacyl synthase activity residues C202, H336, and H376. A malonyl-CoA:ACP transacylase (MAT) domain region spans residues 560–895; sequence VFSGQGSQYA…FLECLGALHV (336 aa). Positions 949 to 1087 are N-terminal hotdog fold; that stretch reads HELLGTFAHD…GLVHAETQAA (139 aa). Residues 949 to 1252 are dehydratase (DH) domain; that stretch reads HELLGTFAHD…AKGVHTTTLP (304 aa). Positions 949–1257 constitute a PKS/mFAS DH domain; it reads HELLGTFAHD…TTTLPGDTGL (309 aa). The active-site Proton acceptor; for dehydratase activity is H981. A C-terminal hotdog fold region spans residues 1107–1257; the sequence is VHEVTPQKLY…TTTLPGDTGL (151 aa). Residue D1169 is the Proton donor; for dehydratase activity of the active site. The segment at 1399–1504 is methyltransferase (CMet) domain; sequence LEVGAGTASA…KKLLKPGGKF (106 aa). The segment at 1799–2111 is enoyl reductase (ER) domain; sequence GLLESIRWKD…AGKHTGKIVL (313 aa). The 79-residue stretch at 2411–2489 folds into the Carrier domain; that stretch reads AQLLENISQL…ELAKIIAKES (79 aa). Residues 2411 to 2489 are ketoreductase (KR) domain; sequence AQLLENISQL…ELAKIIAKES (79 aa). An O-(pantetheine 4'-phosphoryl)serine modification is found at S2449.

It functions in the pathway secondary metabolite biosynthesis. Functionally, highly reducing polyketide synthase; part of the gene cluster that mediates the biosynthesis of beauveriolides I and III, cyclodepsipeptides acting as inhibitors of the acyl-CoA:cholesterol acyltransferase. The HR-PKS cm3B initiates the biosynthesis of beauveriolides by iteratively catalyzing the formation of the linear polyketide chain. The ATP-dependent acetyl-CoA ligase cm3D converts the polyketide carboxylic acid to a CoA thioester which id shuttled to the first T domain in the NRPS cm3A by the acetyltransferase cm3C. Cm3A contains 13 domains and assembles the polyketide chain, L-phenylalanine, L-alanine, and D-leucine (or D-allo-isoleucine) to form beauveriolide I (or beauveriolide III). The production of both beauveriolides I and III suggests the substrate adaptability of cm3B, using different amino acids as substrates. The protein is Highly reducing polyketide synthase cm3B of Cordyceps militaris (strain CM01) (Caterpillar fungus).